The primary structure comprises 201 residues: Recombination protein RecR (201 aa).

The C4-type zinc-finger motif lies at 60–75 (CSCCGNVDTIDPCTVC). A Toprim domain is found at 83 to 178 (SVIIVVEDVS…KITRLAHGVP (96 aa)).

It belongs to the RecR family.

May play a role in DNA repair. It seems to be involved in an RecBC-independent recombinational process of DNA repair. It may act with RecF and RecO. The protein is Recombination protein RecR of Agrobacterium fabrum (strain C58 / ATCC 33970) (Agrobacterium tumefaciens (strain C58)).